Consider the following 467-residue polypeptide: MTTFQELGLSQEVMKAIERMGFEETTPIQAKTIPLSLQNKDVIGQAQTGTGKTAAFGIPIVEKVNVKNSAVQALVVAPTRELAIQVSEELYKIGAVKRVRVLPIYGGQDIERQIRALKKHPHVIVGTPGRIIDHINRGTLRLEHVHTVVLDEADEMLNMGFIEDIEAILSHVPAERQTLLFSATMPDPIRRIAERFMNEPELVKVKAKEMTVPNIQQYYLEVHEKKKFDILTRLLDIQAPELAIVFGRTKRRVDELAEALNLRGYAAEGIHGDLSQAKRLSVLRKFKEGAIEILVATDVAARGLDISGVTHVYNFDIPQDPESYVHRIGRTGRAGKTGVAMTFVTPREIGQLHHIERTTKRKMERMKPPTLDEALEGQQRIAIEKLLNVVETENLSFYKRAAEELLEEHDSVTIVAACLKMLTREPDTTPVQLTEEPPLAVKREKKRGGRPDGSARSRTKKRRITAH.

The short motif at 2–30 is the Q motif element; the sequence is TTFQELGLSQEVMKAIERMGFEETTPIQA. Positions 33 to 203 constitute a Helicase ATP-binding domain; it reads IPLSLQNKDV…ERFMNEPELV (171 aa). 46–53 serves as a coordination point for ATP; the sequence is AQTGTGKT. The DEAD box signature appears at 151-154; it reads DEAD. Residues 214–374 form the Helicase C-terminal domain; it reads NIQQYYLEVH…RMKPPTLDEA (161 aa). A disordered region spans residues 428-467; it reads TTPVQLTEEPPLAVKREKKRGGRPDGSARSRTKKRRITAH. Residues 457-467 show a composition bias toward basic residues; the sequence is SRTKKRRITAH.

It belongs to the DEAD box helicase family. CshA subfamily. As to quaternary structure, oligomerizes, may be a member of the RNA degradosome.

It is found in the cytoplasm. The enzyme catalyses ATP + H2O = ADP + phosphate + H(+). In terms of biological role, DEAD-box RNA helicase possibly involved in RNA degradation. Unwinds dsRNA in both 5'- and 3'-directions, has RNA-dependent ATPase activity. The protein is DEAD-box ATP-dependent RNA helicase CshA of Geobacillus kaustophilus (strain HTA426).